Consider the following 483-residue polypeptide: Dual specificity protein phosphatase CDC14C (483 aa).

Residues 1-45 (MKRKSEGRSSWAAATCSPCCSLTSPSVKKIRSPTQQDPRHRDPQD) form a disordered region. The short motif at 1–53 (MKRKSEGRSSWAAATCSPCCSLTSPSVKKIRSPTQQDPRHRDPQDDVYLDITD) is the Nucleolar localization signal element. Residues 12–26 (AAATCSPCCSLTSPS) show a composition bias toward low complexity. The a stretch occupies residues 43 to 197 (PQDDVYLDIT…AMQYGFLNFN (155 aa)). Positions 198–211 (SFNLDEYEHYEKAE) are linker. The b stretch occupies residues 212–378 (NGDLNWIIPD…EGDYFCQKLK (167 aa)). A Tyrosine-protein phosphatase domain is found at 213–373 (GDLNWIIPDR…TSLWLEGDYF (161 aa)). Cys-313 functions as the Phosphocysteine intermediate in the catalytic mechanism. A disordered region spans residues 407–426 (QDQQEPEPYSDDDEINGGTQ). Residues 408 to 421 (DQQEPEPYSDDDEI) are compositionally biased toward acidic residues. Residues 444-466 (ILLTCPLAVLTSALCSVVIWWIV) traverse the membrane as a helical segment.

This sequence belongs to the protein-tyrosine phosphatase family. Non-receptor class CDC14 subfamily.

Its subcellular location is the membrane. It is found in the nucleus. The protein localises to the nucleolus. The protein resides in the cytoplasm. It localises to the cytoskeleton. The enzyme catalyses O-phospho-L-tyrosyl-[protein] + H2O = L-tyrosyl-[protein] + phosphate. It carries out the reaction O-phospho-L-seryl-[protein] + H2O = L-seryl-[protein] + phosphate. It catalyses the reaction O-phospho-L-threonyl-[protein] + H2O = L-threonyl-[protein] + phosphate. Functionally, dual-specificity phosphatase. Preferentially dephosphorylates proteins modified by proline-directed kinases. The protein is Dual specificity protein phosphatase CDC14C of Symphalangus syndactylus (Siamang).